Consider the following 168-residue polypeptide: Cyclin-dependent kinase 4 inhibitor C (168 aa).

4 ANK repeats span residues 4–33, 37–65, 69–98, and 102–132; these read PWGN…NVNA, FGRT…NPDL, TGFA…DVNI, and EGNL…NVGH.

Belongs to the CDKN2 cyclin-dependent kinase inhibitor family. As to quaternary structure, heterodimer of p18 with CDK6. In terms of tissue distribution, highest levels found in skeletal muscle. Also found in pancreas and heart.

In terms of biological role, interacts strongly with CDK6, weakly with CDK4. Inhibits cell growth and proliferation with a correlated dependence on endogenous retinoblastoma protein RB. The polypeptide is Cyclin-dependent kinase 4 inhibitor C (CDKN2C) (Homo sapiens (Human)).